Reading from the N-terminus, the 186-residue chain is MSVREVIQKNEAKLKKSIEAFQHEIASIRTGKATTALLDRVKVEAYGQLMPLKQVGNIGVADVHTLMVQVWDKGMVGPAEKAIRDANLGLNPVAEGQSIRVSIPPLTEERRKEFVKLTRKFGEDSKVSLRNLRRDMIQEIEKLEKEKTIGEDEKNRGKKDADELLHKYEKQINELISHKEKEIMEV.

Belongs to the RRF family.

The protein localises to the cytoplasm. Functionally, responsible for the release of ribosomes from messenger RNA at the termination of protein biosynthesis. May increase the efficiency of translation by recycling ribosomes from one round of translation to another. This Chlorobium phaeovibrioides (strain DSM 265 / 1930) (Prosthecochloris vibrioformis (strain DSM 265)) protein is Ribosome-recycling factor.